Here is a 361-residue protein sequence, read N- to C-terminus: S-adenosylmethionine:tRNA ribosyltransferase-isomerase (361 aa).

The protein belongs to the QueA family. In terms of assembly, monomer.

It is found in the cytoplasm. It carries out the reaction 7-aminomethyl-7-carbaguanosine(34) in tRNA + S-adenosyl-L-methionine = epoxyqueuosine(34) in tRNA + adenine + L-methionine + 2 H(+). The protein operates within tRNA modification; tRNA-queuosine biosynthesis. In terms of biological role, transfers and isomerizes the ribose moiety from AdoMet to the 7-aminomethyl group of 7-deazaguanine (preQ1-tRNA) to give epoxyqueuosine (oQ-tRNA). This chain is S-adenosylmethionine:tRNA ribosyltransferase-isomerase, found in Glaesserella parasuis serovar 5 (strain SH0165) (Haemophilus parasuis).